The following is a 337-amino-acid chain: Casein kinase I isoform alpha (337 aa).

Alanine 2 bears the N-acetylalanine mark. Serine 4 carries the phosphoserine modification. An N6-acetyllysine modification is found at lysine 8. Residues 17-285 (YKLVRKIGSG…YLRQLFRILF (269 aa)) form the Protein kinase domain. Residues 23-31 (IGSGSFGDI) and lysine 46 contribute to the ATP site. Aspartate 136 functions as the Proton acceptor in the catalytic mechanism. Over residues 309 to 325 (AASSSGQGQQAQTPTGK) the composition is skewed to low complexity. Residues 309-337 (AASSSGQGQQAQTPTGKQTDKTKSNMKGF) are disordered.

The protein belongs to the protein kinase superfamily. CK1 Ser/Thr protein kinase family. Casein kinase I subfamily. Interacts with the Axin complex. Interacts with TUT1, leading to TUT1 phosphorylation. Interacts with FAM83A, FAM83B, FAM83C, FAM83D, FAM83E, FAM83F, FAM83G and FAM83H (via DUF1669). Interaction with FAM83H recruits CSNK1A1 to keratin filaments. Post-translationally, phosphorylated by MTOR in response to mitogenic stimulation, leading to its activation.

Its subcellular location is the cytoplasm. The protein localises to the cytoskeleton. It is found in the microtubule organizing center. It localises to the centrosome. The protein resides in the chromosome. Its subcellular location is the centromere. The protein localises to the kinetochore. It is found in the nucleus speckle. It localises to the cilium basal body. The protein resides in the spindle. It carries out the reaction L-seryl-[protein] + ATP = O-phospho-L-seryl-[protein] + ADP + H(+). The catalysed reaction is L-threonyl-[protein] + ATP = O-phospho-L-threonyl-[protein] + ADP + H(+). In terms of biological role, casein kinases are operationally defined by their preferential utilization of acidic proteins such as caseins as substrates. Can phosphorylate a large number of proteins. Participates in Wnt signaling. Phosphorylates CTNNB1 at 'Ser-45'. May phosphorylate PER1 and PER2. May play a role in segregating chromosomes during mitosis. May play a role in keratin cytoskeleton disassembly and thereby, it may regulate epithelial cell migration. Acts as a positive regulator of mTORC1 and mTORC2 signaling in response to nutrients by mediating phosphorylation of DEPTOR inhibitor. Acts as an inhibitor of NLRP3 inflammasome assembly by mediating phosphorylation of NLRP3. The protein is Casein kinase I isoform alpha (Csnk1a1) of Mus musculus (Mouse).